A 322-amino-acid polypeptide reads, in one-letter code: NADH-quinone oxidoreductase subunit H (322 aa).

The next 8 helical transmembrane spans lie at 15-35 (ILHI…LSIL), 82-102 (IFIL…PTIP), 114-134 (IGIL…LFAG), 149-169 (ASAQ…GVIA), 186-206 (VWNV…GIAL), 243-263 (ISII…YFGF), 265-285 (GSSF…FILI), and 302-322 (WKIC…FILI).

The protein belongs to the complex I subunit 1 family. NDH-1 is composed of 13 different subunits. Subunits NuoA, H, J, K, L, M, N constitute the membrane sector of the complex.

The protein resides in the cell membrane. The catalysed reaction is a quinone + NADH + 5 H(+)(in) = a quinol + NAD(+) + 4 H(+)(out). Its function is as follows. NDH-1 shuttles electrons from NADH, via FMN and iron-sulfur (Fe-S) centers, to quinones in the respiratory chain. The immediate electron acceptor for the enzyme in this species is believed to be ubiquinone. Couples the redox reaction to proton translocation (for every two electrons transferred, four hydrogen ions are translocated across the cytoplasmic membrane), and thus conserves the redox energy in a proton gradient. This subunit may bind ubiquinone. This Buchnera aphidicola subsp. Schizaphis graminum (strain Sg) protein is NADH-quinone oxidoreductase subunit H.